A 415-amino-acid polypeptide reads, in one-letter code: Multidrug resistance protein MdtA (415 aa).

The first 21 residues, 1 to 21 (MKGSYKSRWVIVIVVVIAAIA), serve as a signal peptide directing secretion. Positions 34-47 (SAAPGATKQAQQSP) are enriched in polar residues. Disordered stretches follow at residues 34–60 (SAAPGATKQAQQSPAGGRRGMRSGPLA) and 392–415 (EAQSATTPEEKATSREYAKKGARS). The span at 399–415 (PEEKATSREYAKKGARS) shows a compositional bias: basic and acidic residues.

The protein belongs to the membrane fusion protein (MFP) (TC 8.A.1) family. As to quaternary structure, part of a tripartite efflux system composed of MdtA, MdtB and MdtC.

It is found in the cell inner membrane. Its function is as follows. The MdtABC tripartite complex confers resistance against novobiocin and deoxycholate. The sequence is that of Multidrug resistance protein MdtA from Escherichia fergusonii (strain ATCC 35469 / DSM 13698 / CCUG 18766 / IAM 14443 / JCM 21226 / LMG 7866 / NBRC 102419 / NCTC 12128 / CDC 0568-73).